A 152-amino-acid polypeptide reads, in one-letter code: MTQTIAIDVRILPHGAGLPLPAYQTAHAAGMDLLAAVAPDAPVVLAPGSHAMVPTGLSIALPDGFEAQVRPRSGLAARHGVTVLNSPGTIDADYRGEVCVLLINHGKEPFTIQRGERIAQMVIASVVRAELAITTTLSETARGSGGFGSTGR.

Substrate-binding positions include 72–74 (RSG), Asn-85, and 89–91 (TID).

This sequence belongs to the dUTPase family. It depends on Mg(2+) as a cofactor.

The catalysed reaction is dUTP + H2O = dUMP + diphosphate + H(+). It functions in the pathway pyrimidine metabolism; dUMP biosynthesis; dUMP from dCTP (dUTP route): step 2/2. In terms of biological role, this enzyme is involved in nucleotide metabolism: it produces dUMP, the immediate precursor of thymidine nucleotides and it decreases the intracellular concentration of dUTP so that uracil cannot be incorporated into DNA. In Bradyrhizobium sp. (strain ORS 278), this protein is Deoxyuridine 5'-triphosphate nucleotidohydrolase.